Reading from the N-terminus, the 1063-residue chain is Alkane uptake protein B (1063 aa).

The N-terminal stretch at 1–17 (MKYNKTLALIPAILLAA) is a signal peptide. Cysteine 18 carries N-palmitoyl cysteine lipidation. A lipid anchor (S-diacylglycerol cysteine) is attached at cysteine 18.

Interacts with the outer membrane protein AupA.

It is found in the cell inner membrane. Its function is as follows. Required for growth on alkanes. Probably involved in the uptake of micelle-solubilized alkanes. May facilitate the transfer of alkanes from the outer membrane to the inner membrane. The protein is Alkane uptake protein B of Marinobacter nauticus (strain ATCC 49840 / DSM 8798 / CIP 103578 / SP17) (Marinobacter hydrocarbonoclasticus).